The following is an 80-amino-acid chain: Large ribosomal subunit protein uL24 (80 aa).

This sequence belongs to the universal ribosomal protein uL24 family. Part of the 50S ribosomal subunit.

Functionally, one of two assembly initiator proteins, it binds directly to the 5'-end of the 23S rRNA, where it nucleates assembly of the 50S subunit. Its function is as follows. One of the proteins that surrounds the polypeptide exit tunnel on the outside of the subunit. The sequence is that of Large ribosomal subunit protein uL24 from Chlorobium phaeovibrioides (strain DSM 265 / 1930) (Prosthecochloris vibrioformis (strain DSM 265)).